Reading from the N-terminus, the 216-residue chain is Penicillin-binding protein activator LpoB (216 aa).

A signal peptide spans 1–20 (MIKNLSRYALVTAFALFLSG). Cysteine 21 carries the N-palmitoyl cysteine lipid modification. The S-diacylglycerol cysteine moiety is linked to residue cysteine 21. The segment at 28 to 77 (QPAPVDEAKPGTEQPAQPTQPVPTVPSVPTVPAQPGPIEHPDQTSQPAPR) is disordered.

Belongs to the LpoB family. As to quaternary structure, interacts with PBP1b.

The protein localises to the cell outer membrane. Functionally, regulator of peptidoglycan synthesis that is essential for the function of penicillin-binding protein 1B (PBP1b). This Enterobacter sp. (strain 638) protein is Penicillin-binding protein activator LpoB.